The sequence spans 189 residues: Threonylcarbamoyl-AMP synthase (189 aa).

Positions 3 to 189 (TTSVTEAAEC…NALTGEVIRP (187 aa)) constitute a YrdC-like domain.

Belongs to the SUA5 family. TsaC subfamily.

The protein localises to the cytoplasm. It carries out the reaction L-threonine + hydrogencarbonate + ATP = L-threonylcarbamoyladenylate + diphosphate + H2O. Its function is as follows. Required for the formation of a threonylcarbamoyl group on adenosine at position 37 (t(6)A37) in tRNAs that read codons beginning with adenine. Catalyzes the conversion of L-threonine, HCO(3)(-)/CO(2) and ATP to give threonylcarbamoyl-AMP (TC-AMP) as the acyladenylate intermediate, with the release of diphosphate. The polypeptide is Threonylcarbamoyl-AMP synthase (Acinetobacter baumannii (strain ACICU)).